A 339-amino-acid polypeptide reads, in one-letter code: GTPase Era (339 aa).

The RPE1 insert domain maps to arginine 4–serine 48. Residues lysine 51–tryptophan 220 enclose the Era-type G domain. A G1 region spans residues glycine 59–serine 66. Glycine 59 to serine 66 serves as a coordination point for GTP. Residues glutamine 85–serine 89 are G2. The segment at aspartate 106–glycine 109 is G3. Residues aspartate 106–isoleucine 110 and asparagine 168–aspartate 171 each bind GTP. A G4 region spans residues asparagine 168–aspartate 171. A G5 region spans residues isoleucine 196–alanine 198. Residues leucine 248–glutamate 325 form the KH type-2 domain.

Belongs to the TRAFAC class TrmE-Era-EngA-EngB-Septin-like GTPase superfamily. Era GTPase family. Monomer.

It localises to the cytoplasm. It is found in the cell inner membrane. An essential GTPase that binds both GDP and GTP, with rapid nucleotide exchange. Plays a role in 16S rRNA processing and 30S ribosomal subunit biogenesis and possibly also in cell cycle regulation and energy metabolism. The protein is GTPase Era of Rickettsia conorii (strain ATCC VR-613 / Malish 7).